The chain runs to 354 residues: Arginase (354 aa).

Positions 136, 159, 161, and 163 each coordinate Mn(2+). 3 residues coordinate L-arginine: N165, S172, and D217. Mn(2+)-binding residues include D266 and D268.

It belongs to the arginase family. As to quaternary structure, homotrimer; oligomerization is dependent on Mn(2+) binding. Mn(2+) is required as a cofactor.

The enzyme catalyses L-arginine + H2O = urea + L-ornithine. The protein operates within nitrogen metabolism; urea cycle; L-ornithine and urea from L-arginine: step 1/1. Its function is as follows. Catalyzes the hydrolysis of L-arginine into urea and L-ornithine, which is a precursor for polyamine biosynthesis. May play a role in parasite intra-hepatic development during the host liver stage. This chain is Arginase, found in Plasmodium berghei (strain Anka).